Consider the following 116-residue polypeptide: Tachykinin-3 (116 aa).

A signal peptide spans 1-20 (MRSAMLFAAVLALSLAWTFG). Residues 21–79 (AVCEEPQGQGGRLSKDSDLYQLPPSLLRRLYDSRPVSLEGLLKVLSKASVGPKETSLPQ) constitute a propeptide that is removed on maturation. M91 is modified (methionine amide). Positions 93–116 (KRNSQPDTPTDVVEENTPSFGILK) are disordered. Positions 95–116 (NSQPDTPTDVVEENTPSFGILK) are excised as a propeptide.

Belongs to the tachykinin family.

The protein localises to the secreted. Functionally, tachykinins are active peptides which excite neurons, evoke behavioral responses, are potent vasodilators and secretagogues, and contract (directly or indirectly) many smooth muscles. Is a critical central regulator of gonadal function. In Mus musculus (Mouse), this protein is Tachykinin-3 (Tac3).